Here is a 652-residue protein sequence, read N- to C-terminus: NAD(P)H-quinone oxidoreductase subunit 5, chloroplastic (652 aa).

A run of 16 helical transmembrane segments spans residues 9–29 (WLIPIFPLAGSLLIGIGLISF), 40–60 (YSFLIIALLGISLILSCLILF), 91–111 (PLTAVMLVIVTTVAILVLIYT), 124–144 (FFAYLSLFTTSMLGLVLSPNL), 147–167 (IYVFWELVGMCSYLLIGFWFT), 188–208 (GLLLGILGFYWMTGSFEFDVI), 225–245 (LAIFFGFLIFLGPVAKSAQFP), 258–278 (TPISALIHAATMVAAGVFLVA), 289–309 (FLMDLIAWTGAITAIIGATIA), 327–347 (LGYMIMAMGMGSYTASLFHLM), 354–374 (ALLFLSAGSTIHGMEPIVGFN), 395–415 (GNAFLIGTLSLCGIPPLACFW), 424–444 (AFVHSPLLWFIGWSTAGLTSF), 482–502 (TLPLIILTLFSITIGWIGTPF), 526–546 (LFIAGSSVGIALLGCYTAYLI), and 630–650 (ILMIIFTLLTILGISQTYYSL).

This sequence belongs to the complex I subunit 5 family. NDH is composed of at least 16 different subunits, 5 of which are encoded in the nucleus.

It localises to the plastid. Its subcellular location is the chloroplast thylakoid membrane. The enzyme catalyses a plastoquinone + NADH + (n+1) H(+)(in) = a plastoquinol + NAD(+) + n H(+)(out). The catalysed reaction is a plastoquinone + NADPH + (n+1) H(+)(in) = a plastoquinol + NADP(+) + n H(+)(out). In terms of biological role, NDH shuttles electrons from NAD(P)H:plastoquinone, via FMN and iron-sulfur (Fe-S) centers, to quinones in the photosynthetic chain and possibly in a chloroplast respiratory chain. The immediate electron acceptor for the enzyme in this species is believed to be plastoquinone. Couples the redox reaction to proton translocation, and thus conserves the redox energy in a proton gradient. This chain is NAD(P)H-quinone oxidoreductase subunit 5, chloroplastic (ndhF), found in Mesostigma viride (Green alga).